A 200-amino-acid chain; its full sequence is Ribosomal RNA large subunit methyltransferase E (200 aa).

S-adenosyl-L-methionine-binding residues include Gly51, Trp53, Asp71, Asp90, and Asp112. Lys151 acts as the Proton acceptor in catalysis.

This sequence belongs to the class I-like SAM-binding methyltransferase superfamily. RNA methyltransferase RlmE family.

The protein resides in the cytoplasm. It carries out the reaction uridine(2552) in 23S rRNA + S-adenosyl-L-methionine = 2'-O-methyluridine(2552) in 23S rRNA + S-adenosyl-L-homocysteine + H(+). Specifically methylates the uridine in position 2552 of 23S rRNA at the 2'-O position of the ribose in the fully assembled 50S ribosomal subunit. This Treponema pallidum (strain Nichols) protein is Ribosomal RNA large subunit methyltransferase E.